We begin with the raw amino-acid sequence, 312 residues long: Probable hydrogen peroxide-inducible genes activator (312 aa).

Residues 8-65 form the HTH lysR-type domain; the sequence is PSLAQLRAFAAVAEHLHFRDAAAAIGMSQPALSGAVSALEESLGVTLLERTTRKVLLS. Residues 25–44 constitute a DNA-binding region (H-T-H motif); that stretch reads FRDAAAAIGMSQPALSGAVS.

The protein belongs to the LysR transcriptional regulatory family.

Required for the induction of a regulon of hydrogen peroxide inducible genes such as catalase and glutathione-reductase. This chain is Probable hydrogen peroxide-inducible genes activator (oxyR), found in Streptomyces viridosporus.